The chain runs to 376 residues: Putative F-box only protein 9 (376 aa).

Residues M1–H44 enclose the F-box domain.

The protein is Putative F-box only protein 9 (FBX9) of Arabidopsis thaliana (Mouse-ear cress).